Consider the following 726-residue polypeptide: Catalase-peroxidase (726 aa).

The span at 1 to 13 (MSMSEETNNSLSS) shows a compositional bias: polar residues. The disordered stretch occupies residues 1 to 34 (MSMSEETNNSLSSGKCPFHHGGSDQSAGEGTGSR). Residues 105–226 (WHGAGTYRSV…LAATEMGLIY (122 aa)) constitute a cross-link (tryptophyl-tyrosyl-methioninium (Trp-Tyr) (with M-252)). The active-site Proton acceptor is His-106. The segment at residues 226 to 252 (YVNPEGPNASGEPLSAAAAIRATFGNM) is a cross-link (tryptophyl-tyrosyl-methioninium (Tyr-Met) (with W-105)). His-267 is a heme b binding site.

Belongs to the peroxidase family. Peroxidase/catalase subfamily. Homodimer or homotetramer. Requires heme b as cofactor. In terms of processing, formation of the three residue Trp-Tyr-Met cross-link is important for the catalase, but not the peroxidase activity of the enzyme.

It carries out the reaction H2O2 + AH2 = A + 2 H2O. The enzyme catalyses 2 H2O2 = O2 + 2 H2O. Functionally, bifunctional enzyme with both catalase and broad-spectrum peroxidase activity. In Enterobacter sp. (strain 638), this protein is Catalase-peroxidase.